Consider the following 235-residue polypeptide: uncharacterized protein (235 aa).

Disordered regions lie at residues 1–36 (MGMLAPGPLQGRRPRKGHKGQEDAVAPGCKASGRGS) and 213–235 (VKTRKSKRRSGEGSHLTTSILEQ).

This is an uncharacterized protein from Homo sapiens (Human).